A 214-amino-acid polypeptide reads, in one-letter code: Soluble inorganic pyrophosphatase (214 aa).

The substrate site is built by K64, R78, and Y90. The Mg(2+) site is built by D100, D105, and D137. Residue Y174 participates in substrate binding.

Belongs to the PPase family. The cofactor is Mg(2+).

It is found in the cytoplasm. It catalyses the reaction diphosphate + H2O = 2 phosphate + H(+). The chain is Soluble inorganic pyrophosphatase (IPP) from Oryza sativa subsp. indica (Rice).